The primary structure comprises 311 residues: uncharacterized protein (311 aa).

This is an uncharacterized protein from Bacillus anthracis.